We begin with the raw amino-acid sequence, 179 residues long: Large ribosomal subunit protein uL5 (179 aa).

The protein belongs to the universal ribosomal protein uL5 family. As to quaternary structure, part of the 50S ribosomal subunit; part of the 5S rRNA/L5/L18/L25 subcomplex. Contacts the 5S rRNA and the P site tRNA. Forms a bridge to the 30S subunit in the 70S ribosome.

This is one of the proteins that bind and probably mediate the attachment of the 5S RNA into the large ribosomal subunit, where it forms part of the central protuberance. In the 70S ribosome it contacts protein S13 of the 30S subunit (bridge B1b), connecting the 2 subunits; this bridge is implicated in subunit movement. Contacts the P site tRNA; the 5S rRNA and some of its associated proteins might help stabilize positioning of ribosome-bound tRNAs. This Vibrio campbellii (strain ATCC BAA-1116) protein is Large ribosomal subunit protein uL5.